A 464-amino-acid polypeptide reads, in one-letter code: Fumarate hydratase class II (464 aa).

Substrate-binding positions include 96 to 98 (SGT), 127 to 130 (HPND), 137 to 139 (SSN), and Thr185. His186 acts as the Proton donor/acceptor in catalysis. Ser316 is a catalytic residue. Substrate is bound by residues Ser317 and 322–324 (KVN).

It belongs to the class-II fumarase/aspartase family. Fumarase subfamily. In terms of assembly, homotetramer.

Its subcellular location is the cytoplasm. It catalyses the reaction (S)-malate = fumarate + H2O. The protein operates within carbohydrate metabolism; tricarboxylic acid cycle; (S)-malate from fumarate: step 1/1. Functionally, involved in the TCA cycle. Catalyzes the stereospecific interconversion of fumarate to L-malate. In Pseudomonas syringae pv. tomato (strain ATCC BAA-871 / DC3000), this protein is Fumarate hydratase class II.